A 261-amino-acid chain; its full sequence is Carnitinyl-CoA dehydratase (261 aa).

The active-site Nucleophile is the E111. E131 serves as the catalytic Proton acceptor.

Belongs to the enoyl-CoA hydratase/isomerase family.

It carries out the reaction (R)-carnitinyl-CoA = crotonobetainyl-CoA + H2O. Its pathway is amine and polyamine metabolism; carnitine metabolism. Its function is as follows. Catalyzes the reversible dehydration of L-carnitinyl-CoA to crotonobetainyl-CoA. This is Carnitinyl-CoA dehydratase from Escherichia coli (strain SMS-3-5 / SECEC).